We begin with the raw amino-acid sequence, 249 residues long: Pyridoxine 5'-phosphate synthase (249 aa).

Asparagine 7 is a 3-amino-2-oxopropyl phosphate binding site. Position 9–10 (9–10 (DH)) interacts with 1-deoxy-D-xylulose 5-phosphate. Arginine 18 is a 3-amino-2-oxopropyl phosphate binding site. Catalysis depends on histidine 43, which acts as the Proton acceptor. Arginine 45 and histidine 50 together coordinate 1-deoxy-D-xylulose 5-phosphate. The Proton acceptor role is filled by glutamate 70. Threonine 100 serves as a coordination point for 1-deoxy-D-xylulose 5-phosphate. Histidine 190 (proton donor) is an active-site residue. 3-amino-2-oxopropyl phosphate contacts are provided by residues glycine 191 and 212–213 (GH).

Belongs to the PNP synthase family. Homooctamer; tetramer of dimers.

It is found in the cytoplasm. It carries out the reaction 3-amino-2-oxopropyl phosphate + 1-deoxy-D-xylulose 5-phosphate = pyridoxine 5'-phosphate + phosphate + 2 H2O + H(+). Its pathway is cofactor biosynthesis; pyridoxine 5'-phosphate biosynthesis; pyridoxine 5'-phosphate from D-erythrose 4-phosphate: step 5/5. In terms of biological role, catalyzes the complicated ring closure reaction between the two acyclic compounds 1-deoxy-D-xylulose-5-phosphate (DXP) and 3-amino-2-oxopropyl phosphate (1-amino-acetone-3-phosphate or AAP) to form pyridoxine 5'-phosphate (PNP) and inorganic phosphate. The sequence is that of Pyridoxine 5'-phosphate synthase from Synechococcus sp. (strain CC9902).